Consider the following 430-residue polypeptide: F-box protein At1g49990 (430 aa).

Positions 1 to 45 (METGRRRTIPEVEILARLPLRSIARFKSVCKRWKSVIESDYFRRL) constitute an F-box domain.

In Arabidopsis thaliana (Mouse-ear cress), this protein is F-box protein At1g49990.